A 399-amino-acid polypeptide reads, in one-letter code: Tryptophan synthase beta chain (399 aa).

At Lys-86 the chain carries N6-(pyridoxal phosphate)lysine.

It belongs to the TrpB family. As to quaternary structure, tetramer of two alpha and two beta chains. It depends on pyridoxal 5'-phosphate as a cofactor.

The catalysed reaction is (1S,2R)-1-C-(indol-3-yl)glycerol 3-phosphate + L-serine = D-glyceraldehyde 3-phosphate + L-tryptophan + H2O. The protein operates within amino-acid biosynthesis; L-tryptophan biosynthesis; L-tryptophan from chorismate: step 5/5. The beta subunit is responsible for the synthesis of L-tryptophan from indole and L-serine. This is Tryptophan synthase beta chain (trpB) from Buchnera aphidicola subsp. Schizaphis graminum (strain Sg).